Here is a 154-residue protein sequence, read N- to C-terminus: Transcriptional repressor NrdR (154 aa).

Residues 3–34 fold into a zinc finger; it reads CPFCNHGELKVIDSRNAPESNAIKRRRECLRC. The ATP-cone domain maps to 48-138; it reads VQVLKRDGRY…VYRRFKDVGE (91 aa).

It belongs to the NrdR family. It depends on Zn(2+) as a cofactor.

Functionally, negatively regulates transcription of bacterial ribonucleotide reductase nrd genes and operons by binding to NrdR-boxes. The chain is Transcriptional repressor NrdR from Chlamydia trachomatis serovar L2 (strain ATCC VR-902B / DSM 19102 / 434/Bu).